The chain runs to 602 residues: Isocitrate dehydrogenase kinase/phosphatase (602 aa).

Residues 325 to 331 (APGIKGM) and K346 contribute to the ATP site. Residue D381 is part of the active site.

This sequence belongs to the AceK family.

It localises to the cytoplasm. The enzyme catalyses L-seryl-[isocitrate dehydrogenase] + ATP = O-phospho-L-seryl-[isocitrate dehydrogenase] + ADP + H(+). Bifunctional enzyme which can phosphorylate or dephosphorylate isocitrate dehydrogenase (IDH) on a specific serine residue. This is a regulatory mechanism which enables bacteria to bypass the Krebs cycle via the glyoxylate shunt in response to the source of carbon. When bacteria are grown on glucose, IDH is fully active and unphosphorylated, but when grown on acetate or ethanol, the activity of IDH declines drastically concomitant with its phosphorylation. The protein is Isocitrate dehydrogenase kinase/phosphatase of Paracidovorax citrulli (strain AAC00-1) (Acidovorax citrulli).